A 90-amino-acid chain; its full sequence is Small ribosomal subunit protein bS18 (90 aa).

Residues 1–14 (MARDNGNKDRDGKR) show a composition bias toward basic and acidic residues. A disordered region spans residues 1–23 (MARDNGNKDRDGKRPNGGRNRKM).

The protein belongs to the bacterial ribosomal protein bS18 family. As to quaternary structure, part of the 30S ribosomal subunit. Forms a tight heterodimer with protein bS6.

Its function is as follows. Binds as a heterodimer with protein bS6 to the central domain of the 16S rRNA, where it helps stabilize the platform of the 30S subunit. The polypeptide is Small ribosomal subunit protein bS18 (Clostridium acetobutylicum (strain ATCC 824 / DSM 792 / JCM 1419 / IAM 19013 / LMG 5710 / NBRC 13948 / NRRL B-527 / VKM B-1787 / 2291 / W)).